The following is a 440-amino-acid chain: MSAIIQAFKDADLRKKIFFTIAMIVLYRIGAQIPSPGVDYATISGRLRDLTQDQSSVYSLINLFSGGALLQLSIFAIGIMPYITASIIVQLLTVVIPHFEELKKEGQSGQAKMMQYTRYLTVALALLQSSGIVALADREQLLGAGIRVLSADRNFFDLIVLVITMTAGAVLVMWMGELITEKGVGNGMSLLIFAGIATRLPTDGMNILGNSGGVVFAVVLASVLILVIGVVFVEQGQRRIPVQYAKRMVGRRQYGGSSTYLPLKVNQAGVIPVIFASSLIYMPVLITQIVNSGSLEVSDNWWQRNIIAHLQTPSSWQYIVLYFALTIFFSYFYVSVQYDPAEQAENMKKYGGFIPGIRPGRPTAEYLGFVMNRLLFVGSLYLAVIAVLPNIMLDLGVDAGSAGATPFGGTAILILVSVALTTVKQIESQLLQSNYEGLLK.

10 helical membrane-spanning segments follow: residues 17-37, 74-94, 116-135, 155-175, 178-198, 213-233, 270-290, 316-336, 374-394, and 403-423; these read IFFTIAMIVLYRIGAQIPSPG, IFAIGIMPYITASIIVQLLTV, YTRYLTVALALLQSSGIVAL, FFDLIVLVITMTAGAVLVMWM, LITEKGVGNGMSLLIFAGIAT, GVVFAVVLASVLILVIGVVFV, VIPVIFASSLIYMPVLITQIV, WQYIVLYFALTIFFSYFYVSV, LLFVGSLYLAVIAVLPNIMLD, and GATPFGGTAILILVSVALTTV.

This sequence belongs to the SecY/SEC61-alpha family. As to quaternary structure, component of the Sec protein translocase complex. Heterotrimer consisting of SecY, SecE and SecG subunits. The heterotrimers can form oligomers, although 1 heterotrimer is thought to be able to translocate proteins. Interacts with the ribosome. Interacts with SecDF, and other proteins may be involved. Interacts with SecA.

It is found in the cell membrane. Its function is as follows. The central subunit of the protein translocation channel SecYEG. Consists of two halves formed by TMs 1-5 and 6-10. These two domains form a lateral gate at the front which open onto the bilayer between TMs 2 and 7, and are clamped together by SecE at the back. The channel is closed by both a pore ring composed of hydrophobic SecY resides and a short helix (helix 2A) on the extracellular side of the membrane which forms a plug. The plug probably moves laterally to allow the channel to open. The ring and the pore may move independently. The sequence is that of Protein translocase subunit SecY from Corynebacterium glutamicum (strain ATCC 13032 / DSM 20300 / JCM 1318 / BCRC 11384 / CCUG 27702 / LMG 3730 / NBRC 12168 / NCIMB 10025 / NRRL B-2784 / 534).